We begin with the raw amino-acid sequence, 180 residues long: MLRLFLSHLLGVWLLLSLRARKIPAQEEVLKACGREFVRLQIRICGSLSWGKSSQQHREPRQAPAALPEIVSSSITSGAEALNGMLEYIPDLPQELKATLSEREPSFRELQPSLKDSNLNLEEVEKSILGRQNEAEDQSLSQLGRSRLDAHSRIKRSDYIRYSDRCCNVGCTRKELADLC.

Residues 1-25 form the signal peptide; that stretch reads MLRLFLSHLLGVWLLLSLRARKIPA. Disulfide bonds link C33-C167, C45-C180, and C166-C171. Positions 53–154 are cleaved as a propeptide — connecting peptide; that stretch reads SSQQHREPRQ…RSRLDAHSRI (102 aa).

Belongs to the insulin family. In terms of assembly, heterodimer of a B chain and an A chain linked by two disulfide bonds. Expressed by the placenta. Exclusively detected in cells located in the lamellar placental labyrinth and absent from other placental and non-placental uterine parts.

It is found in the secreted. Relaxin is an ovarian hormone that acts with estrogen to produce dilatation of the birth canal in many mammals. The polypeptide is Prorelaxin (RLN) (Felis catus (Cat)).